A 35-amino-acid chain; its full sequence is Photosystem II reaction center protein T (35 aa).

Residues 3 to 23 (ALVYTFLLVGTLGIIFFAIFF) traverse the membrane as a helical segment.

The protein belongs to the PsbT family. In terms of assembly, PSII is composed of 1 copy each of membrane proteins PsbA, PsbB, PsbC, PsbD, PsbE, PsbF, PsbH, PsbI, PsbJ, PsbK, PsbL, PsbM, PsbT, PsbY, PsbZ, Psb30/Ycf12, at least 3 peripheral proteins of the oxygen-evolving complex and a large number of cofactors. It forms dimeric complexes.

It localises to the plastid. The protein resides in the chloroplast thylakoid membrane. Its function is as follows. Found at the monomer-monomer interface of the photosystem II (PS II) dimer, plays a role in assembly and dimerization of PSII. PSII is a light-driven water plastoquinone oxidoreductase, using light energy to abstract electrons from H(2)O, generating a proton gradient subsequently used for ATP formation. This is Photosystem II reaction center protein T from Marchantia polymorpha (Common liverwort).